We begin with the raw amino-acid sequence, 227 residues long: Ribosomal RNA small subunit methyltransferase G (227 aa).

S-adenosyl-L-methionine is bound by residues Gly-81, Leu-86, 131-132 (AE), and Arg-149.

This sequence belongs to the methyltransferase superfamily. RNA methyltransferase RsmG family.

The protein localises to the cytoplasm. In terms of biological role, specifically methylates the N7 position of guanine in position 518 of 16S rRNA. In Rhodococcus jostii (strain RHA1), this protein is Ribosomal RNA small subunit methyltransferase G.